A 689-amino-acid chain; its full sequence is Pentatricopeptide repeat-containing protein At2g03380, mitochondrial (689 aa).

The N-terminal 12 residues, 1–12, are a transit peptide targeting the mitochondrion; the sequence is MLRSITLSPTRR. PPR repeat units follow at residues 75–105, 106–140, 141–171, 175–205, 206–240, 241–275, 276–306, 307–341, 342–372, 376–406, 407–441, 442–476, 479–509, 510–544, 545–580, and 581–611; these read DISI…IPEP, DFYL…GFRY, DDIV…LVKV, DNVV…ITLR, NVVC…NVLG, NEYT…GIEL, SSCL…HSHV, DLVM…EIKP, NCVT…SIKV, DTNV…ESEK, DIVA…SVTP, NGVT…GFLA, SVHV…IEEK, NTIT…QQKP, NEST…NFTP, and STKH…MPIQ. The interval 616 to 689 is type E motif; degenerate; sequence CFGAFLHGCG…SKIAGHSTME (74 aa).

Belongs to the PPR family. PCMP-E subfamily.

It localises to the mitochondrion. The protein is Pentatricopeptide repeat-containing protein At2g03380, mitochondrial (PCMP-E47) of Arabidopsis thaliana (Mouse-ear cress).